Reading from the N-terminus, the 363-residue chain is GDSL esterase/lipase At3g14220 (363 aa).

The first 28 residues, 1–28 (MAKNRNLVFFLGVLASFTLSSFPVTVSG), serve as a signal peptide directing secretion. Serine 39 functions as the Nucleophile in the catalytic mechanism. Residues aspartate 318 and histidine 321 contribute to the active site.

This sequence belongs to the 'GDSL' lipolytic enzyme family.

It is found in the secreted. The sequence is that of GDSL esterase/lipase At3g14220 from Arabidopsis thaliana (Mouse-ear cress).